A 663-amino-acid polypeptide reads, in one-letter code: DNA ligase (663 aa).

Residues 34–38 (DYEYD), 83–84 (SL), and Glu114 each bind NAD(+). Lys116 acts as the N6-AMP-lysine intermediate in catalysis. Residues Arg137, Glu171, Lys286, and Lys310 each contribute to the NAD(+) site. Residues Cys404, Cys407, Cys422, and Cys427 each contribute to the Zn(2+) site. One can recognise a BRCT domain in the interval 585 to 663 (TVESPLTGKN…ADEFIKLANG (79 aa)).

It belongs to the NAD-dependent DNA ligase family. LigA subfamily. Requires Mg(2+) as cofactor. It depends on Mn(2+) as a cofactor.

The enzyme catalyses NAD(+) + (deoxyribonucleotide)n-3'-hydroxyl + 5'-phospho-(deoxyribonucleotide)m = (deoxyribonucleotide)n+m + AMP + beta-nicotinamide D-nucleotide.. DNA ligase that catalyzes the formation of phosphodiester linkages between 5'-phosphoryl and 3'-hydroxyl groups in double-stranded DNA using NAD as a coenzyme and as the energy source for the reaction. It is essential for DNA replication and repair of damaged DNA. In Brachyspira hyodysenteriae (strain ATCC 49526 / WA1), this protein is DNA ligase.